The chain runs to 26 residues: Turripeptide OL57 (26 aa).

In terms of processing, contains 2 disulfide bonds. Expressed by the venom duct.

The protein resides in the secreted. In terms of biological role, acts as a neurotoxin by inhibiting an ion channel. The polypeptide is Turripeptide OL57 (Iotyrris olangoensis (Sea snail)).